The sequence spans 131 residues: Glycine cleavage system H protein (131 aa).

The Lipoyl-binding domain occupies R24–E106. K65 carries the post-translational modification N6-lipoyllysine.

It belongs to the GcvH family. As to quaternary structure, the glycine cleavage system is composed of four proteins: P, T, L and H. It depends on (R)-lipoate as a cofactor.

Its function is as follows. The glycine cleavage system catalyzes the degradation of glycine. The H protein shuttles the methylamine group of glycine from the P protein to the T protein. This chain is Glycine cleavage system H protein, found in Xanthomonas euvesicatoria pv. vesicatoria (strain 85-10) (Xanthomonas campestris pv. vesicatoria).